Consider the following 361-residue polypeptide: Isopentenyl-diphosphate delta-isomerase (361 aa).

A substrate-binding site is contributed by 12–13 (RK). FMN is bound by residues serine 70, 71-73 (SMT), serine 101, and asparagine 130. 101–103 (SMR) provides a ligand contact to substrate. Substrate is bound at residue glutamine 165. Glutamate 166 is a binding site for Mg(2+). FMN contacts are provided by residues lysine 197 and 310–311 (AG).

It belongs to the IPP isomerase type 2 family. In terms of assembly, homooctamer. Dimer of tetramers. FMN serves as cofactor. It depends on NADPH as a cofactor. Requires Mg(2+) as cofactor.

It is found in the cytoplasm. The enzyme catalyses isopentenyl diphosphate = dimethylallyl diphosphate. Functionally, involved in the biosynthesis of isoprenoids. Catalyzes the 1,3-allylic rearrangement of the homoallylic substrate isopentenyl (IPP) to its allylic isomer, dimethylallyl diphosphate (DMAPP). This chain is Isopentenyl-diphosphate delta-isomerase, found in Chlorobium luteolum (strain DSM 273 / BCRC 81028 / 2530) (Pelodictyon luteolum).